The primary structure comprises 841 residues: Protein translocase subunit SecA (841 aa).

ATP contacts are provided by residues Q87, 105-109 (GEGKT), and D494. The Zn(2+) site is built by C825, C827, C836, and C837.

This sequence belongs to the SecA family. As to quaternary structure, monomer and homodimer. Part of the essential Sec protein translocation apparatus which comprises SecA, SecYEG and auxiliary proteins SecDF-YajC and YidC. Requires Zn(2+) as cofactor.

It is found in the cell inner membrane. It localises to the cytoplasm. It carries out the reaction ATP + H2O + cellular proteinSide 1 = ADP + phosphate + cellular proteinSide 2.. Part of the Sec protein translocase complex. Interacts with the SecYEG preprotein conducting channel. Has a central role in coupling the hydrolysis of ATP to the transfer of proteins into and across the cell membrane, serving as an ATP-driven molecular motor driving the stepwise translocation of polypeptide chains across the membrane. The protein is Protein translocase subunit SecA of Syntrophus aciditrophicus (strain SB).